A 61-amino-acid chain; its full sequence is Small ribosomal subunit protein uS14 (61 aa).

Cysteine 24, cysteine 27, cysteine 40, and cysteine 43 together coordinate Zn(2+).

Belongs to the universal ribosomal protein uS14 family. Zinc-binding uS14 subfamily. In terms of assembly, part of the 30S ribosomal subunit. Contacts proteins S3 and S10. Zn(2+) is required as a cofactor.

Its function is as follows. Binds 16S rRNA, required for the assembly of 30S particles and may also be responsible for determining the conformation of the 16S rRNA at the A site. The chain is Small ribosomal subunit protein uS14 from Natranaerobius thermophilus (strain ATCC BAA-1301 / DSM 18059 / JW/NM-WN-LF).